The sequence spans 272 residues: Shikimate dehydrogenase (NADP(+)) (272 aa).

Residues 14-16 (SKS) and Thr61 contribute to the shikimate site. Lys65 serves as the catalytic Proton acceptor. Position 77 (Glu77) interacts with NADP(+). Positions 86 and 102 each coordinate shikimate. NADP(+)-binding positions include 126-130 (GAGGA), 149-154 (NRTVSR), and Met213. Tyr215 contacts shikimate. Position 237 (Gly237) interacts with NADP(+).

This sequence belongs to the shikimate dehydrogenase family. Homodimer.

The catalysed reaction is shikimate + NADP(+) = 3-dehydroshikimate + NADPH + H(+). The protein operates within metabolic intermediate biosynthesis; chorismate biosynthesis; chorismate from D-erythrose 4-phosphate and phosphoenolpyruvate: step 4/7. Its function is as follows. Involved in the biosynthesis of the chorismate, which leads to the biosynthesis of aromatic amino acids. Catalyzes the reversible NADPH linked reduction of 3-dehydroshikimate (DHSA) to yield shikimate (SA). The protein is Shikimate dehydrogenase (NADP(+)) of Escherichia coli (strain SMS-3-5 / SECEC).